The chain runs to 158 residues: Transcriptional repressor NrdR (158 aa).

A zinc finger spans residues 3–34; that stretch reads CPYCGYPDSRVIDSRPTDDNTAIRRRRECLKC. In terms of domain architecture, ATP-cone spans 49–139; sequence ILVIKKDNRR…VYRQFKDINT (91 aa).

This sequence belongs to the NrdR family. The cofactor is Zn(2+).

Its function is as follows. Negatively regulates transcription of bacterial ribonucleotide reductase nrd genes and operons by binding to NrdR-boxes. The chain is Transcriptional repressor NrdR from Caldanaerobacter subterraneus subsp. tengcongensis (strain DSM 15242 / JCM 11007 / NBRC 100824 / MB4) (Thermoanaerobacter tengcongensis).